A 415-amino-acid polypeptide reads, in one-letter code: Probable carboxypeptidase ACLA_013260 (415 aa).

Residues M1 to A17 form the signal peptide. Residue N97 is glycosylated (N-linked (GlcNAc...) asparagine). Residue D145 participates in Zn(2+) binding. Residue E177 is the Proton acceptor of the active site. E178 serves as a coordination point for Zn(2+). A glycan (N-linked (GlcNAc...) asparagine) is linked at N271.

It belongs to the peptidase M20A family. Requires Zn(2+) as cofactor.

It is found in the secreted. This chain is Probable carboxypeptidase ACLA_013260, found in Aspergillus clavatus (strain ATCC 1007 / CBS 513.65 / DSM 816 / NCTC 3887 / NRRL 1 / QM 1276 / 107).